The following is a 70-amino-acid chain: Small ribosomal subunit protein bS21 (70 aa).

Belongs to the bacterial ribosomal protein bS21 family.

The polypeptide is Small ribosomal subunit protein bS21 (Sulfurovum sp. (strain NBC37-1)).